The sequence spans 228 residues: Uracil-DNA glycosylase (228 aa).

Residue Asp64 is the Proton acceptor of the active site.

Belongs to the uracil-DNA glycosylase (UDG) superfamily. UNG family.

The protein localises to the cytoplasm. The enzyme catalyses Hydrolyzes single-stranded DNA or mismatched double-stranded DNA and polynucleotides, releasing free uracil.. In terms of biological role, excises uracil residues from the DNA which can arise as a result of misincorporation of dUMP residues by DNA polymerase or due to deamination of cytosine. This is Uracil-DNA glycosylase from Yersinia pseudotuberculosis serotype IB (strain PB1/+).